Consider the following 2924-residue polypeptide: Zinc finger ZZ-type and EF-hand domain-containing protein 1 (2924 aa).

The disordered stretch occupies residues 1 to 41; the sequence is MGNAPSNSSEDEAAAAGGEGWSPHQDWAADSGTTPGPGPAA. Residue G2 is the site of N-myristoyl glycine attachment. The span at 28–41 shows a compositional bias: low complexity; sequence AADSGTTPGPGPAA. Positions 111 to 146 constitute an EF-hand domain; sequence CSGEQFEEAFAQFDAEGDGTVDAENMLEALKNSSGA. Residues 226–405 enclose the DOC domain; that stretch reads LVQKEKESPG…AIWYWSLLTS (180 aa). S240 carries the post-translational modification Phosphoserine. Positions 1452–1470 are enriched in basic and acidic residues; that stretch reads HLQPLDRRQRTSSVVEEHF. The interval 1452–1527 is disordered; sequence HLQPLDRRQR…STPTRRPPFT (76 aa). Low complexity predominate over residues 1472-1485; sequence GSASPTEAATPAAG. Residues S1475, S1488, and S1509 each carry the phosphoserine modification. Phosphothreonine is present on T1510. A compositionally biased stretch (pro residues) spans 1514-1523; sequence PSPPSTPTRR. Position 1515 is a phosphoserine (S1515). Residues T1519 and T1521 each carry the phosphothreonine modification. Phosphoserine is present on residues S1535 and S1538. 2 ZZ-type zinc fingers span residues 1776-1831 and 1825-1880; these read NVDI…FTCD and NMEF…MVTI. Zn(2+)-binding residues include C1781, C1784, C1795, C1798, C1804, C1807, H1817, H1821, C1830, C1833, C1844, C1847, C1853, C1856, H1866, and H1870. The disordered stretch occupies residues 2388–2418; the sequence is DLELDERGDQEEELDRPVSSPGEAEQKKLDP. Phosphoserine is present on S2407. An N6-acetyllysine modification is found at K2630.

Interacts with KLF6 and KLF9. Interacts via (ZZ-type 2 zinc finger) with histone H3 trimethylated at 'Lys-4' (H3K4me3) and histone H3 acetylated at 'Lys-4' (H3K4ac).

Histone H3 reader which may act as a transcriptional coactivator for KLF6 and KLF9 transcription factors. The protein is Zinc finger ZZ-type and EF-hand domain-containing protein 1 (Zzef1) of Mus musculus (Mouse).